We begin with the raw amino-acid sequence, 1094 residues long: Transport and Golgi organization protein 6 homolog (1094 aa).

The helical transmembrane segment at 468 to 488 threads the bilayer; the sequence is LTVLMDSLLPVLGVLFLLYCF. S556 is subject to Phosphoserine. Over residues 777–795 the composition is skewed to basic and acidic residues; it reads EEQQQTSHERPTDVAHSHL. Residues 777–834 form a disordered region; it reads EEQQQTSHERPTDVAHSHLEQQQSHETAPQTGLQSNAPIIPQGVNEPSTTTSQKSGSV. 2 stretches are compositionally biased toward polar residues: residues 796-813 and 821-834; these read EQQQ…QSNA and NEPS…SGSV. HEAT repeat units lie at residues 873-909 and 952-988; these read LEMQ…SDVY and SKYR…CQRL.

The protein belongs to the Tango6 family.

It is found in the membrane. This Homo sapiens (Human) protein is Transport and Golgi organization protein 6 homolog (TANGO6).